The primary structure comprises 155 residues: MRIRLISVGGRMPGWAAEGYREYAQRLGGGISLELVEIPLGRRGKGADPRRALDEEGRRMLKALGDEQVVALDVRGKAWDTPALARELDGWLHDGRDLALLVGGPDGLHPDCLARAERRWSLSPLTFPHMLVRVLLAEQLYRAWSLLQGHPYHRA.

S-adenosyl-L-methionine-binding positions include Leu72, Gly103, and 122–127 (LSPLTF).

This sequence belongs to the RNA methyltransferase RlmH family. In terms of assembly, homodimer.

It is found in the cytoplasm. The enzyme catalyses pseudouridine(1915) in 23S rRNA + S-adenosyl-L-methionine = N(3)-methylpseudouridine(1915) in 23S rRNA + S-adenosyl-L-homocysteine + H(+). Its function is as follows. Specifically methylates the pseudouridine at position 1915 (m3Psi1915) in 23S rRNA. This is Ribosomal RNA large subunit methyltransferase H from Alkalilimnicola ehrlichii (strain ATCC BAA-1101 / DSM 17681 / MLHE-1).